The chain runs to 216 residues: Cytidylate kinase (216 aa).

7–15 (GPAASGKGT) contributes to the ATP binding site.

It belongs to the cytidylate kinase family. Type 1 subfamily.

Its subcellular location is the cytoplasm. The enzyme catalyses CMP + ATP = CDP + ADP. The catalysed reaction is dCMP + ATP = dCDP + ADP. The protein is Cytidylate kinase of Methylocella silvestris (strain DSM 15510 / CIP 108128 / LMG 27833 / NCIMB 13906 / BL2).